Here is a 427-residue protein sequence, read N- to C-terminus: 3-phosphoshikimate 1-carboxyvinyltransferase (427 aa).

3-phosphoshikimate-binding residues include Lys22, Ser23, and Arg27. Lys22 contacts phosphoenolpyruvate. The phosphoenolpyruvate site is built by Gly96 and Arg124. 3-phosphoshikimate contacts are provided by Ser170, Ser171, Gln172, Ser199, Asp313, Asn336, and Lys340. Residue Gln172 participates in phosphoenolpyruvate binding. The active-site Proton acceptor is the Asp313. Phosphoenolpyruvate contacts are provided by Arg344, Arg386, and Lys411.

The protein belongs to the EPSP synthase family. As to quaternary structure, monomer.

The protein localises to the cytoplasm. The enzyme catalyses 3-phosphoshikimate + phosphoenolpyruvate = 5-O-(1-carboxyvinyl)-3-phosphoshikimate + phosphate. Its pathway is metabolic intermediate biosynthesis; chorismate biosynthesis; chorismate from D-erythrose 4-phosphate and phosphoenolpyruvate: step 6/7. Catalyzes the transfer of the enolpyruvyl moiety of phosphoenolpyruvate (PEP) to the 5-hydroxyl of shikimate-3-phosphate (S3P) to produce enolpyruvyl shikimate-3-phosphate and inorganic phosphate. In Aeromonas salmonicida, this protein is 3-phosphoshikimate 1-carboxyvinyltransferase.